A 218-amino-acid polypeptide reads, in one-letter code: Ribose-5-phosphate isomerase A (218 aa).

Substrate contacts are provided by residues T28–T31, D81–D84, and K94–G97. The Proton acceptor role is filled by E103. K121 is a binding site for substrate.

It belongs to the ribose 5-phosphate isomerase family. Homodimer.

The catalysed reaction is aldehydo-D-ribose 5-phosphate = D-ribulose 5-phosphate. The protein operates within carbohydrate degradation; pentose phosphate pathway; D-ribose 5-phosphate from D-ribulose 5-phosphate (non-oxidative stage): step 1/1. In terms of biological role, catalyzes the reversible conversion of ribose-5-phosphate to ribulose 5-phosphate. This is Ribose-5-phosphate isomerase A from Buchnera aphidicola subsp. Baizongia pistaciae (strain Bp).